We begin with the raw amino-acid sequence, 432 residues long: Enolase 2 (432 aa).

(2R)-2-phosphoglycerate is bound at residue glutamine 163. The active-site Proton donor is glutamate 205. The Mg(2+) site is built by aspartate 242, glutamate 287, and aspartate 314. Lysine 339, arginine 368, serine 369, and lysine 390 together coordinate (2R)-2-phosphoglycerate. Catalysis depends on lysine 339, which acts as the Proton acceptor.

The protein belongs to the enolase family. In terms of assembly, homodimer. Probably forms octamers. The cofactor is Mg(2+).

It localises to the cytoplasm. The protein resides in the secreted. The protein localises to the cell surface. It carries out the reaction (2R)-2-phosphoglycerate = phosphoenolpyruvate + H2O. The protein operates within carbohydrate degradation; glycolysis; pyruvate from D-glyceraldehyde 3-phosphate: step 4/5. Its function is as follows. Catalyzes the reversible conversion of 2-phosphoglycerate (2-PG) into phosphoenolpyruvate (PEP). It is essential for the degradation of carbohydrates via glycolysis. This Lactobacillus gasseri (strain ATCC 33323 / DSM 20243 / BCRC 14619 / CIP 102991 / JCM 1131 / KCTC 3163 / NCIMB 11718 / NCTC 13722 / AM63) protein is Enolase 2.